The primary structure comprises 396 residues: L-lactate dehydrogenase (396 aa).

The FMN hydroxy acid dehydrogenase domain maps to 1 to 380 (MIISAASDYR…SGDSLVQELG (380 aa)). Tyr24 is a substrate binding site. 2 residues coordinate FMN: Ser106 and Gln127. Residue Tyr129 participates in substrate binding. Position 155 (Thr155) interacts with FMN. Arg164 contacts substrate. An FMN-binding site is contributed by Lys251. His275 functions as the Proton acceptor in the catalytic mechanism. Arg278 is a substrate binding site. FMN is bound at residue 306–330 (DSGIRNGLDVVRMIALGADTVLLGR).

It belongs to the FMN-dependent alpha-hydroxy acid dehydrogenase family. The cofactor is FMN.

It localises to the cell inner membrane. It catalyses the reaction (S)-lactate + A = pyruvate + AH2. Catalyzes the conversion of L-lactate to pyruvate. Is coupled to the respiratory chain. The chain is L-lactate dehydrogenase from Salmonella paratyphi A (strain ATCC 9150 / SARB42).